Consider the following 357-residue polypeptide: MAIDENKQKALAAALGQIEKQFGKGSIMRLGEDRSMDVETISTGSLSLDIALGAGGLPMGRIVEIYGPESSGKTTLTLQVIAAAQREGKTCAFIDAEHALDPIYAKKLGVDIDNLLCSQPDTGEQALEICDALTRSGAVDVIIVDSVAALTPKAEIEGEIGDSHMGLAARMMSQAMRKLAGNLKQANTLLIFINQIRMKIGVMFGNPETTTGGNALKFYASVRLDIRRTGAIKEGEEVVGSETRVKVVKNKVAAPFKQAEFQILYGEGINIHGELVDLGVKHKLIEKAGAWYSYNGDKIGQGKANACNFLKENPTISAELDKKLREMLLHKGNELKPAAAGNSHDEDELAGEGKEEF.

Residue 67–74 (GPESSGKT) coordinates ATP. Positions 334–357 (ELKPAAAGNSHDEDELAGEGKEEF) are disordered.

It belongs to the RecA family.

The protein resides in the cytoplasm. Its function is as follows. Can catalyze the hydrolysis of ATP in the presence of single-stranded DNA, the ATP-dependent uptake of single-stranded DNA by duplex DNA, and the ATP-dependent hybridization of homologous single-stranded DNAs. It interacts with LexA causing its activation and leading to its autocatalytic cleavage. The polypeptide is Protein RecA (Pectobacterium atrosepticum (strain SCRI 1043 / ATCC BAA-672) (Erwinia carotovora subsp. atroseptica)).